The primary structure comprises 330 residues: Aspartate--ammonia ligase (330 aa).

The protein belongs to the class-II aminoacyl-tRNA synthetase family. AsnA subfamily.

The protein resides in the cytoplasm. The enzyme catalyses L-aspartate + NH4(+) + ATP = L-asparagine + AMP + diphosphate + H(+). It participates in amino-acid biosynthesis; L-asparagine biosynthesis; L-asparagine from L-aspartate (ammonia route): step 1/1. The chain is Aspartate--ammonia ligase from Escherichia coli (strain SMS-3-5 / SECEC).